We begin with the raw amino-acid sequence, 295 residues long: Pyridoxal 5'-phosphate synthase subunit PdxS (295 aa).

Asp-25 provides a ligand contact to D-ribose 5-phosphate. Lys-82 functions as the Schiff-base intermediate with D-ribose 5-phosphate in the catalytic mechanism. Gly-154 is a D-ribose 5-phosphate binding site. Residue Arg-166 participates in D-glyceraldehyde 3-phosphate binding. Residues Gly-215 and 236-237 (GS) contribute to the D-ribose 5-phosphate site.

Belongs to the PdxS/SNZ family. In terms of assembly, in the presence of PdxT, forms a dodecamer of heterodimers.

It carries out the reaction aldehydo-D-ribose 5-phosphate + D-glyceraldehyde 3-phosphate + L-glutamine = pyridoxal 5'-phosphate + L-glutamate + phosphate + 3 H2O + H(+). It participates in cofactor biosynthesis; pyridoxal 5'-phosphate biosynthesis. Catalyzes the formation of pyridoxal 5'-phosphate from ribose 5-phosphate (RBP), glyceraldehyde 3-phosphate (G3P) and ammonia. The ammonia is provided by the PdxT subunit. Can also use ribulose 5-phosphate and dihydroxyacetone phosphate as substrates, resulting from enzyme-catalyzed isomerization of RBP and G3P, respectively. The sequence is that of Pyridoxal 5'-phosphate synthase subunit PdxS from Macrococcus caseolyticus (strain JCSC5402) (Macrococcoides caseolyticum).